The sequence spans 371 residues: Queuine tRNA-ribosyltransferase (371 aa).

D90 acts as the Proton acceptor in catalysis. Residues 90–94 (DSGGF), D144, Q188, and G215 each bind substrate. The tract at residues 246 to 252 (GVGTPED) is RNA binding. The active-site Nucleophile is D265. The segment at 270–274 (TRNAR) is RNA binding; important for wobble base 34 recognition. Zn(2+)-binding residues include C303, C305, C308, and H334.

This sequence belongs to the queuine tRNA-ribosyltransferase family. Homodimer. Within each dimer, one monomer is responsible for RNA recognition and catalysis, while the other monomer binds to the replacement base PreQ1. The cofactor is Zn(2+).

The enzyme catalyses 7-aminomethyl-7-carbaguanine + guanosine(34) in tRNA = 7-aminomethyl-7-carbaguanosine(34) in tRNA + guanine. It participates in tRNA modification; tRNA-queuosine biosynthesis. In terms of biological role, catalyzes the base-exchange of a guanine (G) residue with the queuine precursor 7-aminomethyl-7-deazaguanine (PreQ1) at position 34 (anticodon wobble position) in tRNAs with GU(N) anticodons (tRNA-Asp, -Asn, -His and -Tyr). Catalysis occurs through a double-displacement mechanism. The nucleophile active site attacks the C1' of nucleotide 34 to detach the guanine base from the RNA, forming a covalent enzyme-RNA intermediate. The proton acceptor active site deprotonates the incoming PreQ1, allowing a nucleophilic attack on the C1' of the ribose to form the product. After dissociation, two additional enzymatic reactions on the tRNA convert PreQ1 to queuine (Q), resulting in the hypermodified nucleoside queuosine (7-(((4,5-cis-dihydroxy-2-cyclopenten-1-yl)amino)methyl)-7-deazaguanosine). This is Queuine tRNA-ribosyltransferase from Neisseria meningitidis serogroup C / serotype 2a (strain ATCC 700532 / DSM 15464 / FAM18).